The primary structure comprises 104 residues: Protein S100-A14 (104 aa).

Residues 27–61 enclose the EF-hand domain; sequence KNFHQYSVEGGKETLTPSELRDLVTQQLPHLMPSN.

Belongs to the S-100 family. Homodimer. Interacts with AGER. In terms of tissue distribution, expressed at highest levels in colon and at moderate levels in thymus, kidney, liver, small intestine, and lung. Low expression in heart and no expression is seen in brain, skeletal muscle, spleen, placenta and peripheral blood leukocytes.

The protein resides in the cytoplasm. Its function is as follows. Modulates P53/TP53 protein levels, and thereby plays a role in the regulation of cell survival and apoptosis. Depending on the context, it can promote cell proliferation or apoptosis. Plays a role in the regulation of cell migration by modulating the levels of MMP2, a matrix protease that is under transcriptional control of P53/TP53. Does not bind calcium. The polypeptide is Protein S100-A14 (S100A14) (Homo sapiens (Human)).